The following is a 77-amino-acid chain: Defensin-like protein 4 (77 aa).

Positions 1–30 are cleaved as a signal peptide; sequence MKFSMRLISAVLFLVMIFVATGMGPVTVEA. 4 cysteine pairs are disulfide-bonded: C33–C77, C44–C64, C50–C71, and C54–C73.

Belongs to the DEFL family. In terms of tissue distribution, expressed in roots, siliques and seeds.

The protein localises to the secreted. Its function is as follows. Confers broad-spectrum resistance to pathogens. This chain is Defensin-like protein 4 (PDF2.1), found in Arabidopsis thaliana (Mouse-ear cress).